Reading from the N-terminus, the 152-residue chain is Aspartate carbamoyltransferase regulatory chain (152 aa).

Cys-109, Cys-114, Cys-138, and Cys-141 together coordinate Zn(2+).

Belongs to the PyrI family. As to quaternary structure, contains catalytic and regulatory chains. Zn(2+) serves as cofactor.

Involved in allosteric regulation of aspartate carbamoyltransferase. In Thermoplasma volcanium (strain ATCC 51530 / DSM 4299 / JCM 9571 / NBRC 15438 / GSS1), this protein is Aspartate carbamoyltransferase regulatory chain.